A 76-amino-acid chain; its full sequence is RNA-binding protein KhpA (76 aa).

The 47-residue stretch at 30–76 (GEVLEVRVNPEDLGRVIGRSGRTAKALRTLVTALADGRRVRVDVVDD) folds into the KH domain.

This sequence belongs to the KhpA RNA-binding protein family.

The protein resides in the cytoplasm. Functionally, a probable RNA-binding protein. This chain is RNA-binding protein KhpA, found in Leifsonia xyli subsp. xyli (strain CTCB07).